A 360-amino-acid polypeptide reads, in one-letter code: Dual-specificity RNA methyltransferase RlmN (360 aa).

E89 acts as the Proton acceptor in catalysis. Positions 95–330 (DSGRGTLCVS…TRVTRGQDID (236 aa)) constitute a Radical SAM core domain. Residues C102 and C333 are joined by a disulfide bond. Positions 109, 113, and 116 each coordinate [4Fe-4S] cluster. S-adenosyl-L-methionine-binding positions include 159 to 160 (GE), S191, 213 to 215 (SLH), and N290. C333 serves as the catalytic S-methylcysteine intermediate.

This sequence belongs to the radical SAM superfamily. RlmN family. It depends on [4Fe-4S] cluster as a cofactor.

The protein resides in the cytoplasm. The catalysed reaction is adenosine(2503) in 23S rRNA + 2 reduced [2Fe-2S]-[ferredoxin] + 2 S-adenosyl-L-methionine = 2-methyladenosine(2503) in 23S rRNA + 5'-deoxyadenosine + L-methionine + 2 oxidized [2Fe-2S]-[ferredoxin] + S-adenosyl-L-homocysteine. It carries out the reaction adenosine(37) in tRNA + 2 reduced [2Fe-2S]-[ferredoxin] + 2 S-adenosyl-L-methionine = 2-methyladenosine(37) in tRNA + 5'-deoxyadenosine + L-methionine + 2 oxidized [2Fe-2S]-[ferredoxin] + S-adenosyl-L-homocysteine. Specifically methylates position 2 of adenine 2503 in 23S rRNA and position 2 of adenine 37 in tRNAs. m2A2503 modification seems to play a crucial role in the proofreading step occurring at the peptidyl transferase center and thus would serve to optimize ribosomal fidelity. The sequence is that of Dual-specificity RNA methyltransferase RlmN from Alkalilimnicola ehrlichii (strain ATCC BAA-1101 / DSM 17681 / MLHE-1).